A 512-amino-acid polypeptide reads, in one-letter code: MTTGKPNILIIMVDQLNGKLFPDGPADFLHAPNLKALAKRSARFHNNYTSSPLCAPARASFMAGQLPSRTRVYDNAAEYQSSIPTYAHHLRRAGYYTALSGKMHFVGPDQLHGFEERLTTDIYPADFGWTPDYRKPGERIDWWYHNLGSVTGAGVAEITNQMEYDDEVAFLANQKLYQLSRENDDESRRPWCLTVSFTHPHDPYVARRKFWDLYEDCEHLTPEVGAIPLDEQDPHSQRIMLSCDYQNFDVTEENVRRSRRAYFANISYLDEKVGELIDTLTRTRMLDDTLILFCSDHGDMLGERGLWFKMNFFEGSARVPLMIAGPGIAPGLHLTPTSNLDVTPTLADLAGISLEEVRPWTDGVSLVPMVNGVERTEPVLMEYAAEASYAPLVAIREGKWKYVYCALDPEQLFDLEADPLELTNLAENPRGPVDQATLTAFRDMRAAHWDMEAFDAAVRESQARRWVVYEALRNGAYYPWDHQPLQKASERYMRNHMNLDTLEESKRYPRGE.

3 residues coordinate Ca(2+): aspartate 14, glutamine 15, and cysteine 54. Residue cysteine 54 is the Nucleophile of the active site. Cysteine 54 bears the 3-oxoalanine (Cys) mark. Histidine 104 is an active-site residue. Aspartate 296 and histidine 297 together coordinate Ca(2+).

Belongs to the sulfatase family. The cofactor is Ca(2+). Post-translationally, the conversion to 3-oxoalanine (also known as C-formylglycine, FGly), of a serine or cysteine residue in prokaryotes and of a cysteine residue in eukaryotes, is critical for catalytic activity.

It carries out the reaction choline sulfate + H2O = choline + sulfate + H(+). It participates in amine and polyamine biosynthesis; choline biosynthesis; choline from choline sulfate: step 1/1. Its function is as follows. Converts choline-O-sulfate into choline. This Rhizobium meliloti (strain 1021) (Ensifer meliloti) protein is Choline-sulfatase (betC).